Here is a 347-residue protein sequence, read N- to C-terminus: NHL repeat-containing protein 3 (347 aa).

The N-terminal stretch at 1-25 (MARFWVCVAGAGFFLAFLVLHSRFC) is a signal peptide. Asn32 carries N-linked (GlcNAc...) asparagine glycosylation. Residues 47–93 (RLDVGWPKHPEYFTGTTFCVAVDSLNGLVYIGQRGDNIPKILVFTED) form an NHL 1 repeat. Asn101 carries N-linked (GlcNAc...) asparagine glycosylation. NHL repeat units follow at residues 150–196 (TPGK…LSQD) and 200–243 (LWLH…FDKD). 2 N-linked (GlcNAc...) asparagine glycosylation sites follow: Asn206 and Asn278. Residues 294 to 338 (GECSVISTIQLADQVLPHLLEVDRKTGAVYVAEIGAKQVQKYVPL) form an NHL 4 repeat.

The protein resides in the secreted. The protein is NHL repeat-containing protein 3 (NHLRC3) of Homo sapiens (Human).